Reading from the N-terminus, the 351-residue chain is Blue-sensitive opsin (351 aa).

The Extracellular portion of the chain corresponds to 1–40 (MKQVPEFHEDFYIPIPLDINNLSAYSPFLVPQDHLGNQGI). An N-linked (GlcNAc...) asparagine glycan is attached at Asn21. Residues 41-65 (FMAMSVFMFFIFIGGASINILTILC) traverse the membrane as a helical segment. Residues 66–77 (TIQFKKLRSHLN) are Cytoplasmic-facing. Residues 78 to 103 (YILVNLSIANLFVAIFGSPLSFYSFF) form a helical membrane-spanning segment. At 104 to 117 (NRYFIFGATACKIE) the chain is on the extracellular side. A disulfide bridge connects residues Cys114 and Cys191. Residues 118 to 137 (GFLATLGGMVGLWSLAVVAF) traverse the membrane as a helical segment. The Cytoplasmic portion of the chain corresponds to 138 to 156 (ERWLVICKPLGNFTFKTPH). A helical membrane pass occupies residues 157–180 (AIAGCILPWISALAASLPPLFGWS). The Extracellular segment spans residues 181–206 (RYIPEGLQCSCGPDWYTTNNKYNNES). The helical transmembrane segment at 207 to 234 (YVMFLFCFCFAVPFGTIVFCYGQLLITL) threads the bilayer. Over 235–256 (KLAAKAQADSASTQKAEREVTK) the chain is Cytoplasmic. The helical transmembrane segment at 257-280 (MVVVMVLGFLVCWAPYASFSLWIV) threads the bilayer. Residues 281–288 (SHRGEEFD) are Extracellular-facing. A helical transmembrane segment spans residues 289–313 (LRMATIPSCLSKASTVYNPVIYVLM). Lys300 bears the N6-(retinylidene)lysine mark. The Cytoplasmic segment spans residues 314-351 (NKQFRSCMMKMVCGKNIEEDEASTSSQVTQVSSVAPEK).

The protein belongs to the G-protein coupled receptor 1 family. Opsin subfamily. Post-translationally, phosphorylated on some or all of the serine and threonine residues present in the C-terminal region. In terms of tissue distribution, the color pigments are found in the cone photoreceptor cells.

The protein localises to the membrane. In terms of biological role, visual pigments are the light-absorbing molecules that mediate vision. They consist of an apoprotein, opsin, covalently linked to cis-retinal. This is Blue-sensitive opsin from Carassius auratus (Goldfish).